A 1455-amino-acid chain; its full sequence is DNA-directed RNA polymerase subunit beta (1455 aa).

Belongs to the RNA polymerase beta chain family. The RNAP catalytic core consists of 2 alpha, 1 beta, 1 beta' and 1 omega subunit. When a sigma factor is associated with the core the holoenzyme is formed, which can initiate transcription.

The enzyme catalyses RNA(n) + a ribonucleoside 5'-triphosphate = RNA(n+1) + diphosphate. In terms of biological role, DNA-dependent RNA polymerase catalyzes the transcription of DNA into RNA using the four ribonucleoside triphosphates as substrates. This is DNA-directed RNA polymerase subunit beta from Rhizorhabdus wittichii (strain DSM 6014 / CCUG 31198 / JCM 15750 / NBRC 105917 / EY 4224 / RW1) (Sphingomonas wittichii).